The following is a 448-amino-acid chain: Probable glycine dehydrogenase (decarboxylating) subunit 1 (448 aa).

Belongs to the GcvP family. N-terminal subunit subfamily. As to quaternary structure, the glycine cleavage system is composed of four proteins: P, T, L and H. In this organism, the P 'protein' is a heterodimer of two subunits.

The catalysed reaction is N(6)-[(R)-lipoyl]-L-lysyl-[glycine-cleavage complex H protein] + glycine + H(+) = N(6)-[(R)-S(8)-aminomethyldihydrolipoyl]-L-lysyl-[glycine-cleavage complex H protein] + CO2. In terms of biological role, the glycine cleavage system catalyzes the degradation of glycine. The P protein binds the alpha-amino group of glycine through its pyridoxal phosphate cofactor; CO(2) is released and the remaining methylamine moiety is then transferred to the lipoamide cofactor of the H protein. In Geobacillus sp. (strain WCH70), this protein is Probable glycine dehydrogenase (decarboxylating) subunit 1.